Reading from the N-terminus, the 238-residue chain is MRPSERAPDQLRAVTLETGVNRYAEGSCLIGFGHTKVLVTATVEENVPGWMRNKGAGWVTAEYGMLPRATHTRGRREAAAGKQTGRTQEIQRLIGRSLRAVVDLKALGERQITLDCDVVQADGGTRTAAITGAWVALRLATKYLLDEGVLKTDPILGQVAAVSCGVFNGVPVLDLDYEEDSNAEADSNFVLTGVGDIVEIQATGEKRGFTRAEFESLYGLAEKGINELFALQRAAIGG.

Phosphate is bound by residues arginine 86 and 124 to 126 (GTR).

It belongs to the RNase PH family. As to quaternary structure, homohexameric ring arranged as a trimer of dimers.

It carries out the reaction tRNA(n+1) + phosphate = tRNA(n) + a ribonucleoside 5'-diphosphate. Phosphorolytic 3'-5' exoribonuclease that plays an important role in tRNA 3'-end maturation. Removes nucleotide residues following the 3'-CCA terminus of tRNAs; can also add nucleotides to the ends of RNA molecules by using nucleoside diphosphates as substrates, but this may not be physiologically important. Probably plays a role in initiation of 16S rRNA degradation (leading to ribosome degradation) during starvation. This Caulobacter vibrioides (strain ATCC 19089 / CIP 103742 / CB 15) (Caulobacter crescentus) protein is Ribonuclease PH.